The sequence spans 81 residues: ATP synthase subunit c (81 aa).

A run of 2 helical transmembrane segments spans residues 7 to 27 (LVAI…AIGF) and 55 to 75 (IAGL…FFIF).

It belongs to the ATPase C chain family. As to quaternary structure, F-type ATPases have 2 components, F(1) - the catalytic core - and F(0) - the membrane proton channel. F(1) has five subunits: alpha(3), beta(3), gamma(1), delta(1), epsilon(1). F(0) has three main subunits: a(1), b(2) and c(10-14). The alpha and beta chains form an alternating ring which encloses part of the gamma chain. F(1) is attached to F(0) by a central stalk formed by the gamma and epsilon chains, while a peripheral stalk is formed by the delta and b chains.

Its subcellular location is the cell inner membrane. F(1)F(0) ATP synthase produces ATP from ADP in the presence of a proton or sodium gradient. F-type ATPases consist of two structural domains, F(1) containing the extramembraneous catalytic core and F(0) containing the membrane proton channel, linked together by a central stalk and a peripheral stalk. During catalysis, ATP synthesis in the catalytic domain of F(1) is coupled via a rotary mechanism of the central stalk subunits to proton translocation. Functionally, key component of the F(0) channel; it plays a direct role in translocation across the membrane. A homomeric c-ring of between 10-14 subunits forms the central stalk rotor element with the F(1) delta and epsilon subunits. The chain is ATP synthase subunit c from Acinetobacter baumannii (strain ACICU).